A 115-amino-acid polypeptide reads, in one-letter code: NADH-ubiquinone oxidoreductase chain 3 (115 aa).

3 consecutive transmembrane segments (helical) span residues 4 to 24 (LLVI…AFWL), 55 to 75 (FFLV…LLPI), and 84 to 104 (INMV…GLAY).

It belongs to the complex I subunit 3 family. Core subunit of respiratory chain NADH dehydrogenase (Complex I) which is composed of 45 different subunits. Interacts with TMEM186. Interacts with TMEM242.

It localises to the mitochondrion inner membrane. It carries out the reaction a ubiquinone + NADH + 5 H(+)(in) = a ubiquinol + NAD(+) + 4 H(+)(out). Core subunit of the mitochondrial membrane respiratory chain NADH dehydrogenase (Complex I) which catalyzes electron transfer from NADH through the respiratory chain, using ubiquinone as an electron acceptor. Essential for the catalytic activity of complex I. The sequence is that of NADH-ubiquinone oxidoreductase chain 3 from Ochrotomys nuttalli (Golden mouse).